Consider the following 246-residue polypeptide: Type III pantothenate kinase (246 aa).

Position 6–13 (6–13) interacts with ATP; it reads DVGNTHSV. A substrate-binding site is contributed by 103–106; that stretch reads GADR. Catalysis depends on D105, which acts as the Proton acceptor. D125 is a binding site for K(+). Residue T128 coordinates ATP. Position 179 (T179) interacts with substrate.

The protein belongs to the type III pantothenate kinase family. Homodimer. It depends on NH4(+) as a cofactor. K(+) is required as a cofactor.

It localises to the cytoplasm. The enzyme catalyses (R)-pantothenate + ATP = (R)-4'-phosphopantothenate + ADP + H(+). It functions in the pathway cofactor biosynthesis; coenzyme A biosynthesis; CoA from (R)-pantothenate: step 1/5. Functionally, catalyzes the phosphorylation of pantothenate (Pan), the first step in CoA biosynthesis. This Thermotoga maritima (strain ATCC 43589 / DSM 3109 / JCM 10099 / NBRC 100826 / MSB8) protein is Type III pantothenate kinase (coaX).